The following is a 972-amino-acid chain: MTDTTKIDYSKTLYLPQTEFPMRAGLPQREPLFVQRWEEMNLYKKLREQAKDRPLYVLHDGPPYANGNIHIGHALNKILKDVITRSFQMRGYNSNYVPGWDCHGLPIEWKIEEKYRAAGKNKDEVPINEFRKECREFASNWIKVQTEEFKRLAILGDFENPYTTMNFHAEARIAGELLKFAASGQLYRGSKPVMWSVVERTALAEAEVEYHDIESDMIWVKFPVAGEVATENDLSGSAVVIWTTTPWTIPGNRAVSYSSRIEYGLFEITEAENDFGPRPGERLVFADKLVEECCAKAKLQFKRLRSVSAEELGKIVLDHPLKGFGGGYEFVVPMLDGDHVTDDAGTGFVHTAPSHGREDFEAWMDNARQLEARGIDPNIPFPVGDDGFYTKDAPGFGPDREGGPARVIDDNGKKGDANKVVIEQLIAADKLFARGRLKHSYPHSWRSKKPVIFRNTPQWFVYMDKNLGDGTTLRSRALKAIDETRFVPAAGQTRLRSMIEGRPDWVLSRQRAWGVPICVFVDEEGNILQDDAVNKRIMDAFEKEGADAWFADGARERFLGARAGEGWTQVRDILDVWFDSGSTHTFTLEDRPDLKWPADVYLEGSDQHRGWFHSSLLESCGTRGRAPYNAVVTHGFTMDEHGKKMSKSLGNTVTPQDVIKESGADILRLWVMTTDYWEDQRLGKSIIQTNIDAYRKLRNTIRWMLGTLAHDEGENVAYADLPELERLMLHRLTELDELVRSGYDTFDFKRIARALVDFMNVELSAFYFDIRKDALYCDAPSSIRRKAALQTVREIFVRLTTWLAPMLPFTMEEAWLDRYPQSVSIHAEQFRPTPAEWRDDVLAEKWRKVRAVRRVVTGALELERADKRIGSSLEAAPVVYIADKSLSDSLEGLDFAEICITSGISVSDAAAPEGAFTLGDVKGVAVVPERAKGEKCARSWRYTTDVGADPEFPEVSARDAAALRELQALGKL.

Positions 63-73 (PYANGNIHIGH) match the 'HIGH' region motif. L-isoleucyl-5'-AMP is bound at residue Glu-603. Residues 644–648 (KMSKS) carry the 'KMSKS' region motif. Lys-647 is a binding site for ATP.

This sequence belongs to the class-I aminoacyl-tRNA synthetase family. IleS type 1 subfamily. In terms of assembly, monomer.

It is found in the cytoplasm. It catalyses the reaction tRNA(Ile) + L-isoleucine + ATP = L-isoleucyl-tRNA(Ile) + AMP + diphosphate. Functionally, catalyzes the attachment of isoleucine to tRNA(Ile). As IleRS can inadvertently accommodate and process structurally similar amino acids such as valine, to avoid such errors it has two additional distinct tRNA(Ile)-dependent editing activities. One activity is designated as 'pretransfer' editing and involves the hydrolysis of activated Val-AMP. The other activity is designated 'posttransfer' editing and involves deacylation of mischarged Val-tRNA(Ile). The chain is Isoleucine--tRNA ligase from Brucella abortus (strain 2308).